The chain runs to 512 residues: uncharacterized protein (512 aa).

A signal peptide spans 1 to 22 (MVSSLIYSLCAVSGLLATTVNG). The N-linked (GlcNAc...) asparagine glycan is linked to N167. Positions 251 to 282 (SAASPPIYEPDRQTDPEDPETGRNNNQGFEGL) are disordered.

The protein resides in the secreted. This is an uncharacterized protein from Arthroderma benhamiae (strain ATCC MYA-4681 / CBS 112371) (Trichophyton mentagrophytes).